The following is a 270-amino-acid chain: Tubulin-specific chaperone B (270 aa).

Residues 214–256 (GTVEFSSGVWIGVELDLPLGKNDGSVKGKQYFQCSPKYGCFAK) enclose the CAP-Gly domain.

It belongs to the TBCB family. As to quaternary structure, supercomplex made of cofactors A to E. Cofactors A and D function by capturing and stabilizing tubulin in a quasi-native conformation. Cofactor E binds to the cofactor D-tubulin complex; interaction with cofactor C then causes the release of tubulin polypeptides that are committed to the native state.

It is found in the cytoplasm. Its subcellular location is the cytoskeleton. Its function is as follows. Binds to alpha-tubulin folding intermediates after their interaction with cytosolic chaperonin in the pathway leading from newly synthesized tubulin to properly folded heterodimer. The polypeptide is Tubulin-specific chaperone B (tbcb) (Dictyostelium discoideum (Social amoeba)).